Here is a 130-residue protein sequence, read N- to C-terminus: Large ribosomal subunit protein bL19 (130 aa).

Belongs to the bacterial ribosomal protein bL19 family.

Functionally, this protein is located at the 30S-50S ribosomal subunit interface and may play a role in the structure and function of the aminoacyl-tRNA binding site. The sequence is that of Large ribosomal subunit protein bL19 from Burkholderia ambifaria (strain ATCC BAA-244 / DSM 16087 / CCUG 44356 / LMG 19182 / AMMD) (Burkholderia cepacia (strain AMMD)).